The sequence spans 85 residues: MTDKIRTVQGRVISDKMDKSFTIAIERKVKHPLLGKFIRRTTKLHVHDENNEARLGDWVEIKECRPVSKTKSWTLVRVVEKATIA.

The protein belongs to the universal ribosomal protein uS17 family. As to quaternary structure, part of the 30S ribosomal subunit.

Its function is as follows. One of the primary rRNA binding proteins, it binds specifically to the 5'-end of 16S ribosomal RNA. In Actinobacillus succinogenes (strain ATCC 55618 / DSM 22257 / CCUG 43843 / 130Z), this protein is Small ribosomal subunit protein uS17.